Here is a 421-residue protein sequence, read N- to C-terminus: Synaptotagmin-1 (421 aa).

Over 1–57 (MVSASRPEALAAPVTTVATLVPHNATEPASPGEGKEDAFSKLKQKFMNELHKIPLPP) the chain is Vesicular. Residue N24 is glycosylated (N-linked (GlcNAc...) asparagine). Residues 58–79 (WALIAIAIVAVLLVVTCCFCVC) traverse the membrane as a helical segment. S-palmitoyl cysteine attachment occurs at residues C74, C75, C77, C79, and C82. Over 80-421 (KKCLFKKKNK…EVDAMLAVKK (342 aa)) the chain is Cytoplasmic. The tract at residues 112–141 (TMKDQALKDDDAETGLTDGEEKEEPKEEEK) is disordered. Positions 121-133 (DDAETGLTDGEEK) are enriched in acidic residues. T128 carries the phosphothreonine modification. Positions 135–381 (EPKEEEKLGK…AIGKVFVGYN (247 aa)) are phospholipid binding. In terms of domain architecture, C2 1 spans 141-260 (KLGKLQYSLD…DFGHVTEEWR (120 aa)). The Ca(2+) site is built by L171, D172, and D178. Position 229 is a phosphotyrosine (Y229). The Ca(2+) site is built by D230, F231, D232, S235, K236, and D238. At S264 the chain carries Phosphoserine. Positions 272–405 (KLGDICFSLR…NPRRPIAQWH (134 aa)) constitute a C2 2 domain. 2 residues coordinate Ca(2+): D303 and D309. Residues S342 and S344 each carry the phosphoserine modification. Residues D363, D365, and D371 each coordinate Ca(2+).

This sequence belongs to the synaptotagmin family. Homotetramer. Heterodimer; heterodimerizes with SYT2 in presence of calcium. Interacts with SCAMP5. Interacts with STON2. Forms a complex with SV2B, syntaxin 1 and SNAP25. Interacts with SV2A, SV2B and SV2C. Interacts with RIMS1. Interacts with PRRT2. Interacts with DNAJC5 in a phosphorylation-dependent manner. Interacts (via N-terminus) with RAB3A. Interacts with SYT12. Interacts with calmodulin. Interacts with DNM1 (via C-terminal proline-rich domain (PRD)); this interaction facilitates vesicle fission during clathrin-mediated endocytosis (CME). Ca(2+) is required as a cofactor. In terms of processing, glycosylated. In terms of tissue distribution, expressed in the brain and adrenal medulla (at protein level).

The protein localises to the cytoplasmic vesicle. It localises to the secretory vesicle membrane. The protein resides in the secretory vesicle. It is found in the synaptic vesicle membrane. Its subcellular location is the chromaffin granule membrane. The protein localises to the cytoplasm. Its function is as follows. Calcium sensor that participates in triggering neurotransmitter release at the synapse. May have a regulatory role in the membrane interactions during trafficking of synaptic vesicles at the active zone of the synapse. It binds acidic phospholipids with a specificity that requires the presence of both an acidic head group and a diacyl backbone. A Ca(2+)-dependent interaction between synaptotagmin and putative receptors for activated protein kinase C has also been reported. It can bind to at least three additional proteins in a Ca(2+)-independent manner; these are neurexins, syntaxin and AP2. Plays a role in dendrite formation by melanocytes. This chain is Synaptotagmin-1, found in Mus musculus (Mouse).